The following is a 96-amino-acid chain: Dynein light chain roadblock-type 1 (96 aa).

Alanine 2 is subject to N-acetylalanine.

Belongs to the GAMAD family. As to quaternary structure, homodimer. The cytoplasmic dynein 1 complex consists of two catalytic heavy chains (HCs) and a number of non-catalytic subunits presented by intermediate chains (ICs), light intermediate chains (LICs) and light chains (LCs); the composition seems to vary in respect to the IC, LIC and LC composition. The heavy chain homodimer serves as a scaffold for the probable homodimeric assembly of the respective non-catalytic subunits. The ICs and LICs bind directly to the HC dimer and the LCs assemble on the IC dimer. Interacts with DYNLRB2. Interacts with DYNC1I1 and DYNC1I2. Interacts with RAB6A isoform 1 (GTP-bound); the interaction is direct. Interacts with RAB6A isoform 2 (GDP-bound); the interaction is direct. Interacts with RAB6B (GDP-bound).

It localises to the cytoplasm. It is found in the cytoskeleton. Its function is as follows. Acts as one of several non-catalytic accessory components of the cytoplasmic dynein 1 complex that are thought to be involved in linking dynein to cargos and to adapter proteins that regulate dynein function. Cytoplasmic dynein 1 acts as a motor for the intracellular retrograde motility of vesicles and organelles along microtubules. The sequence is that of Dynein light chain roadblock-type 1 (Dynlrb1) from Mus musculus (Mouse).